The chain runs to 262 residues: 5'-nucleotidase SurE (262 aa).

Positions 8, 9, 39, and 95 each coordinate a divalent metal cation.

Belongs to the SurE nucleotidase family. A divalent metal cation serves as cofactor.

The protein resides in the cytoplasm. It carries out the reaction a ribonucleoside 5'-phosphate + H2O = a ribonucleoside + phosphate. In terms of biological role, nucleotidase that shows phosphatase activity on nucleoside 5'-monophosphates. The sequence is that of 5'-nucleotidase SurE from Methanothermobacter thermautotrophicus (strain ATCC 29096 / DSM 1053 / JCM 10044 / NBRC 100330 / Delta H) (Methanobacterium thermoautotrophicum).